The following is a 232-amino-acid chain: 5'-methylthioadenosine/S-adenosylhomocysteine nucleosidase (232 aa).

The Proton acceptor role is filled by glutamate 12. Substrate-binding positions include glycine 78, isoleucine 152, and 173–174 (ME). Catalysis depends on aspartate 197, which acts as the Proton donor.

It belongs to the PNP/UDP phosphorylase family. MtnN subfamily. Homodimer.

It catalyses the reaction S-adenosyl-L-homocysteine + H2O = S-(5-deoxy-D-ribos-5-yl)-L-homocysteine + adenine. It carries out the reaction S-methyl-5'-thioadenosine + H2O = 5-(methylsulfanyl)-D-ribose + adenine. The catalysed reaction is 5'-deoxyadenosine + H2O = 5-deoxy-D-ribose + adenine. It participates in amino-acid biosynthesis; L-methionine biosynthesis via salvage pathway; S-methyl-5-thio-alpha-D-ribose 1-phosphate from S-methyl-5'-thioadenosine (hydrolase route): step 1/2. In terms of biological role, catalyzes the irreversible cleavage of the glycosidic bond in both 5'-methylthioadenosine (MTA) and S-adenosylhomocysteine (SAH/AdoHcy) to adenine and the corresponding thioribose, 5'-methylthioribose and S-ribosylhomocysteine, respectively. Also cleaves 5'-deoxyadenosine, a toxic by-product of radical S-adenosylmethionine (SAM) enzymes, into 5-deoxyribose and adenine. Thus, is required for in vivo function of the radical SAM enzymes biotin synthase and lipoic acid synthase, that are inhibited by 5'-deoxyadenosine accumulation. The polypeptide is 5'-methylthioadenosine/S-adenosylhomocysteine nucleosidase (Salmonella choleraesuis (strain SC-B67)).